The following is an 843-amino-acid chain: Protein piwi (843 aa).

The Nuclear localization signal signature appears at methionine 1–proline 12. A disordered region spans residues methionine 1 to tyrosine 76. Residues methionine 1–lysine 257 are interaction with CBX5 and papi. 4 positions are modified to symmetric dimethylarginine: arginine 7, arginine 9, arginine 10, and arginine 11. Over residues proline 41–tryptophan 72 the composition is skewed to basic and acidic residues. Positions threonine 263–glycine 372 constitute a PAZ domain. The Piwi domain maps to leucine 538 to histidine 829. Glutamine 589 lines the Mg(2+) pocket. Residues aspartate 614 and aspartate 685 contribute to the active site. Position 843 (leucine 843) interacts with Mg(2+).

The protein belongs to the argonaute family. Piwi subfamily. As to quaternary structure, in the ovaries, part of a complex composed of at least Panx, nxf2, piwi and Nxt1. The complex is knowns as Panx-induced co-transcriptional silencing (PICTS) complex, Panx-nxf2-dependent TAP/p15 silencing (Pandas complex), SFiNX (silencing factor interacting nuclear export variant) or piwi-Panx-nxf2-p15 (PPNP) complex. Interacts with vas; this interaction is RNA-independent. Interacts with Dcr-1 and Fmr1; these interactions occur in polar granules. Interacts (via N-terminal region) with CBX5 (via chromoshadow domain). Forms a complex with Hsp83 and Hop; probably Hop mediates the interaction between piwi and Hsp83. Forms a complex with Yb body components armi and fs(1)Yb; this interaction is required for proper piRNA loading and nuclear localization of piwi. Interaction of Piwi and fs(1)Yb is likely to occur via armi. Interacts (via the N-terminal region when unmethylated or symmetrically methylated at Arg-10) with papi (via Tudor domain). Interacts with vret. Interacts with Panx. Interacts with arx. Interacts with Tudor-SN. Interacts with Nup358 (via N-terminus). Associates with the nuclear pore complex via interaction with Elys. Interacts with thoc5; the interaction might be partly RNA-mediated. Interacts with xmas-2. Post-translationally, symmetrically dimethylated, most likely by csul. Methylation at Arg-10 enhances binding to papi whereas methylation at Arg-7, Arg-9 or Arg-11 reduces binding affinity to papi. Phosphorylated on serine and tyrosine residues in an Hsp83-dependent manner. In terms of tissue distribution, expressed in ovaries (at protein level). Expressed somatically in ovariole terminal filament cells, epithelial sheath cells, cap cells and follicle cells (at protein level). Expressed in nurse cells and oocytes in developing egg chambers (at protein level). In embryos, accumulates in pole cells (at protein level). In larval and adult testis, expressed in a germinal proliferative center at the apical tip containing somatic hub cells and mitotically dividing germ stem cells (at protein level).

Its subcellular location is the cytoplasm. It is found in the nucleus. The protein localises to the nucleoplasm. The protein resides in the chromosome. Its function is as follows. Acts via the piwi-interacting RNA (piRNA) metabolic process, which mediates the repression of transposable elements during meiosis by forming complexes composed of piRNAs and Piwi proteins and governs the methylation and subsequent repression of transposons. Directly binds piRNAs, a class of 24 to 30 nucleotide RNAs that are generated by a Dicer-independent mechanism and are primarily derived from transposons and other repeated sequence elements. In ovarian somatic cells, mediates silencing of transposable elements at the transcriptional level in a mael-dependent manner. Involved in silencing of long terminal repeat (LTR) retrotransposons in male germline. In testis, regulates spermatogenesis together with Tudor-SN. In germ cells, mediates silencing at both transcriptional and post-transcriptional levels and is involved in the maintenance of populations of primary and secondary piRNAs. Piwi-mediated transcriptional silencing is accompanied by the formation of His3 trimethylated on 'Lys-10' (H3K9me3) associated euchromatin and heterochromatin. In ovary, associates predominantly with antisense piRNAs that contain uridine at their 5' end. Association with sense piRNAs is also observed but to a lesser extent. Mediates a somatic signaling mechanism required for the maintenance of germline stem cells to produce and maintain a daughter germline stem cell. It is not essential for the further differentiation of the committed daughter cell. Acts cell autonomously to promote germline stem cell division. Its role in stem cell maintenance does not seem to require nuclear localization. Required maternally for the posterior localization of osk and vas and for pole cell formation during oogenesis and early embryogenesis. Together with Hop and Hsp83, mediates canalization, also known as developmental robustness, likely via epigenetic silencing of existing genetic variants and suppression of transposon-induced new genetic variation. Shows RNA cleavage activity, although is not required for any of its known functions. In the ovaries, forms a complex with nxf2, Panx and Nxt1 which acts as effectors of cotranscriptional transposon silencing. This is Protein piwi from Drosophila melanogaster (Fruit fly).